The sequence spans 248 residues: MEADAPAGYRDPSGRHGAVTLPARPEPIAFDADTTVLIVVDMQNAYATKGGYLDLAGFDVSATGPVIERIAQAVAAARAAGIRVVWFQNGWDPDYVEAGGPGSPNWHKSNALKTMRRRPEMNQRLLAKGTWDYALVDALTPEPGDIVLPKPRYSGFYNTPLDSMLRARGIRTLVFTGIATNVCVESTLRDGYHREYFGIVLADATHQAGPPALQEGALRNIETFFGWVSDVAAFEAALSSDEARRIPA.

Catalysis depends on D41, which acts as the Proton acceptor. Residue K150 is part of the active site. The active-site Nucleophile is C183.

This sequence belongs to the isochorismatase family. RutB subfamily.

It carries out the reaction (Z)-3-ureidoacrylate + H2O + H(+) = (Z)-3-aminoacrylate + NH4(+) + CO2. The enzyme catalyses (Z)-3-ureidoacrylate + H2O = (Z)-3-aminoacrylate + carbamate + H(+). The catalysed reaction is (Z)-2-methylureidoacrylate + H2O + H(+) = (Z)-2-methylaminoacrylate + NH4(+) + CO2. Its function is as follows. Hydrolyzes ureidoacrylate to form aminoacrylate and carbamate. The carbamate hydrolyzes spontaneously, thereby releasing one of the nitrogen atoms of the pyrimidine ring as ammonia and one of its carbon atoms as CO2. The polypeptide is Ureidoacrylate amidohydrolase RutB (Methylorubrum extorquens (strain CM4 / NCIMB 13688) (Methylobacterium extorquens)).